We begin with the raw amino-acid sequence, 287 residues long: NADH-cytochrome b5 reductase 1 (287 aa).

The chain crosses the membrane as a helical span at residues 5–25; the sequence is FEALVTALVLAVSFIFIYGKF. Residues 41-145 form the FAD-binding FR-type domain; that stretch reads KDWQEFSLLT…RGPKGFYHYE (105 aa). FAD-binding positions include 125 to 142 and 151 to 183; these read AELA…KGFY and EIGM…RVCL.

The protein belongs to the flavoprotein pyridine nucleotide cytochrome reductase family. As to quaternary structure, monomer. Component of the 2-(3-amino-3-carboxypropyl)histidine synthase complex composed of DPH1, DPH2, DPH3 and a NADH-dependent reductase, predominantly CBR1. Requires FAD as cofactor.

The protein resides in the mitochondrion outer membrane. It catalyses the reaction 2 Fe(III)-[cytochrome b5] + NADH = 2 Fe(II)-[cytochrome b5] + NAD(+) + H(+). The catalysed reaction is 2 Fe(3+)-[Dph3] + NADH = 2 Fe(2+)-[Dph3] + NAD(+) + H(+). The protein operates within protein modification; peptidyl-diphthamide biosynthesis. Functionally, NADH-dependent reductase for DPH3 and cytochrome b5. Required for the first step of diphthamide biosynthesis, a post-translational modification of histidine which occurs in elongation factor 2. DPH1 and DPH2 transfer a 3-amino-3-carboxypropyl (ACP) group from S-adenosyl-L-methionine (SAM) to a histidine residue, the reaction is assisted by a reduction system comprising DPH3 and a NADH-dependent reductase, predominantly CBR1. By reducing DPH3, also involved in the formation of the tRNA wobble base modification mcm5s 2U (5-methoxycarbonylmethyl-2-thiouridine), mediated by the elongator complex. The cytochrome b5/NADH cytochrome b5 reductase electron transfer system supports the catalytic activity of several sterol biosynthetic enzymes. The protein is NADH-cytochrome b5 reductase 1 (CBR1) of Eremothecium gossypii (strain ATCC 10895 / CBS 109.51 / FGSC 9923 / NRRL Y-1056) (Yeast).